A 144-amino-acid polypeptide reads, in one-letter code: Large ribosomal subunit protein uL15 (144 aa).

Positions 1–52 (MRLNTLSPAEGAKHSAKRLGRGIGSGLGKTGGRGHKGQKSRTGSGVRRGFEG) are disordered. Residues 21–31 (RGIGSGLGKTG) show a composition bias toward gly residues.

Belongs to the universal ribosomal protein uL15 family. As to quaternary structure, part of the 50S ribosomal subunit.

Functionally, binds to the 23S rRNA. In Haemophilus influenzae (strain 86-028NP), this protein is Large ribosomal subunit protein uL15.